A 376-amino-acid polypeptide reads, in one-letter code: Cobalt-precorrin-5B C(1)-methyltransferase (376 aa).

It belongs to the CbiD family.

It catalyses the reaction Co-precorrin-5B + S-adenosyl-L-methionine = Co-precorrin-6A + S-adenosyl-L-homocysteine. Its pathway is cofactor biosynthesis; adenosylcobalamin biosynthesis; cob(II)yrinate a,c-diamide from sirohydrochlorin (anaerobic route): step 6/10. In terms of biological role, catalyzes the methylation of C-1 in cobalt-precorrin-5B to form cobalt-precorrin-6A. In Bradyrhizobium sp. (strain BTAi1 / ATCC BAA-1182), this protein is Cobalt-precorrin-5B C(1)-methyltransferase.